A 459-amino-acid polypeptide reads, in one-letter code: Argininosuccinate lyase (459 aa).

This sequence belongs to the lyase 1 family. Argininosuccinate lyase subfamily.

The protein resides in the cytoplasm. It catalyses the reaction 2-(N(omega)-L-arginino)succinate = fumarate + L-arginine. It participates in amino-acid biosynthesis; L-arginine biosynthesis; L-arginine from L-ornithine and carbamoyl phosphate: step 3/3. This is Argininosuccinate lyase from Lactococcus lactis subsp. cremoris (strain SK11).